A 173-amino-acid chain; its full sequence is Large ribosomal subunit protein uL10 (173 aa).

The protein belongs to the universal ribosomal protein uL10 family. As to quaternary structure, part of the ribosomal stalk of the 50S ribosomal subunit. The N-terminus interacts with L11 and the large rRNA to form the base of the stalk. The C-terminus forms an elongated spine to which L12 dimers bind in a sequential fashion forming a multimeric L10(L12)X complex.

Forms part of the ribosomal stalk, playing a central role in the interaction of the ribosome with GTP-bound translation factors. The chain is Large ribosomal subunit protein uL10 from Geobacter sp. (strain M21).